Here is a 289-residue protein sequence, read N- to C-terminus: N-acetylmuramoyl-L-alanine amidase AmiA (289 aa).

Positions 1–34 form a signal peptide, tat-type signal; that stretch reads MSTFKLLKTLTSRRQVLKTGLAALTLSGMSHAVA. Residues 36–61 form a disordered region; it reads EETLKTSNGHSKPKTKKTGSKRLVML. The span at 46-55 shows a compositional bias: basic residues; sequence SKPKTKKTGS. The MurNAc-LAA domain occupies 59-273; that stretch reads VMLDPGHGGI…IATAIANGII (215 aa).

The protein belongs to the N-acetylmuramoyl-L-alanine amidase 3 family. Post-translationally, predicted to be exported by the Tat system. The position of the signal peptide cleavage has not been experimentally proven.

The protein localises to the periplasm. The enzyme catalyses Hydrolyzes the link between N-acetylmuramoyl residues and L-amino acid residues in certain cell-wall glycopeptides.. Cell-wall hydrolase involved in septum cleavage during cell division. This Salmonella typhimurium (strain LT2 / SGSC1412 / ATCC 700720) protein is N-acetylmuramoyl-L-alanine amidase AmiA (amiA).